Consider the following 252-residue polypeptide: Putative cytosolic acyl coenzyme A thioester hydrolase-like (252 aa).

HotDog ACOT-type domains are found at residues 1-90 (MIKE…LSLT) and 146-252 (SYSQ…SVFT).

Homodimer. As to expression, expressed in all tissues examined. Up-regulated in nasopharyngeal carcinoma (at protein level).

It is found in the cytoplasm. The enzyme catalyses hexadecanoyl-CoA + H2O = hexadecanoate + CoA + H(+). Its function is as follows. Acyl-CoA thioesterases are a group of enzymes that catalyze the hydrolysis of acyl-CoAs to the free fatty acid and coenzyme A (CoASH), providing the potential to regulate intracellular levels of acyl-CoAs, free fatty acids and CoASH. The sequence is that of Putative cytosolic acyl coenzyme A thioester hydrolase-like (ACOT7L) from Homo sapiens (Human).